A 93-amino-acid chain; its full sequence is Cell division protein CrgA (93 aa).

2 consecutive transmembrane segments (helical) span residues 31 to 51 (VWFVSLFIGLMLIGLIWLMVF) and 70 to 90 (LGPWNYAIAFAFMITGLLLTM).

Belongs to the CrgA family.

It localises to the cell membrane. In terms of biological role, involved in cell division. The protein is Cell division protein CrgA of Mycobacterium bovis (strain ATCC BAA-935 / AF2122/97).